The primary structure comprises 186 residues: Single-stranded DNA-binding protein 1 (186 aa).

An SSB domain is found at Met-1–Leu-108. Residues Gln-120–Phe-186 form a disordered region. The segment covering Asp-132 to Ser-141 has biased composition (polar residues). The span at Ser-175 to Phe-186 shows a compositional bias: acidic residues.

As to quaternary structure, homotetramer.

This Tropheryma whipplei (strain TW08/27) (Whipple's bacillus) protein is Single-stranded DNA-binding protein 1 (ssb1).